A 490-amino-acid chain; its full sequence is Argininosuccinate lyase (490 aa).

2 disordered regions span residues Asp426 to Ala452 and Ala469 to Glu490. The span at Pro440 to Ala452 shows a compositional bias: low complexity. Positions Ala469–Val480 are enriched in basic and acidic residues.

The protein belongs to the lyase 1 family. Argininosuccinate lyase subfamily.

It is found in the cytoplasm. The catalysed reaction is 2-(N(omega)-L-arginino)succinate = fumarate + L-arginine. Its pathway is amino-acid biosynthesis; L-arginine biosynthesis; L-arginine from L-ornithine and carbamoyl phosphate: step 3/3. The chain is Argininosuccinate lyase from Natronomonas pharaonis (strain ATCC 35678 / DSM 2160 / CIP 103997 / JCM 8858 / NBRC 14720 / NCIMB 2260 / Gabara) (Halobacterium pharaonis).